A 132-amino-acid polypeptide reads, in one-letter code: Small ribosomal subunit protein uS8 (132 aa).

This sequence belongs to the universal ribosomal protein uS8 family. In terms of assembly, part of the 30S ribosomal subunit. Contacts proteins S5 and S12.

In terms of biological role, one of the primary rRNA binding proteins, it binds directly to 16S rRNA central domain where it helps coordinate assembly of the platform of the 30S subunit. This chain is Small ribosomal subunit protein uS8, found in Clostridium tetani (strain Massachusetts / E88).